The primary structure comprises 185 residues: Elongation factor P (185 aa).

Belongs to the elongation factor P family.

Its subcellular location is the cytoplasm. It participates in protein biosynthesis; polypeptide chain elongation. Its function is as follows. Involved in peptide bond synthesis. Stimulates efficient translation and peptide-bond synthesis on native or reconstituted 70S ribosomes in vitro. Probably functions indirectly by altering the affinity of the ribosome for aminoacyl-tRNA, thus increasing their reactivity as acceptors for peptidyl transferase. This Streptococcus equi subsp. zooepidemicus (strain MGCS10565) protein is Elongation factor P.